A 327-amino-acid polypeptide reads, in one-letter code: Probable NAD(P)H-dependent D-xylose reductase xyl1 (327 aa).

Catalysis depends on Tyr-57, which acts as the Proton donor. Position 119 (His-119) interacts with substrate. NAD(+) is bound by residues 173–174 (SN), 222–231 (SSLGPQSFIE), and 278–288 (KSNNPDRLAQN).

It belongs to the aldo/keto reductase family.

It carries out the reaction xylitol + NAD(+) = D-xylose + NADH + H(+). The enzyme catalyses xylitol + NADP(+) = D-xylose + NADPH + H(+). Its pathway is carbohydrate metabolism; D-xylose degradation. In terms of biological role, catalyzes the initial reaction in the xylose utilization pathway by reducing D-xylose into xylitol. Xylose is a major component of hemicelluloses such as xylan. Most fungi utilize D-xylose via three enzymatic reactions, xylose reductase (XR), xylitol dehydrogenase (XDH), and xylulokinase, to form xylulose 5-phosphate, which enters pentose phosphate pathway. This is Probable NAD(P)H-dependent D-xylose reductase xyl1 (xyl1) from Arthroderma otae (strain ATCC MYA-4605 / CBS 113480) (Microsporum canis).